The chain runs to 737 residues: 1,4-alpha-glucan branching enzyme GlgB (737 aa).

Catalysis depends on Asp419, which acts as the Nucleophile. Glu472 acts as the Proton donor in catalysis.

Belongs to the glycosyl hydrolase 13 family. GlgB subfamily. Monomer.

It catalyses the reaction Transfers a segment of a (1-&gt;4)-alpha-D-glucan chain to a primary hydroxy group in a similar glucan chain.. It participates in glycan biosynthesis; glycogen biosynthesis. Functionally, catalyzes the formation of the alpha-1,6-glucosidic linkages in glycogen by scission of a 1,4-alpha-linked oligosaccharide from growing alpha-1,4-glucan chains and the subsequent attachment of the oligosaccharide to the alpha-1,6 position. The sequence is that of 1,4-alpha-glucan branching enzyme GlgB from Mesorhizobium japonicum (strain LMG 29417 / CECT 9101 / MAFF 303099) (Mesorhizobium loti (strain MAFF 303099)).